The primary structure comprises 85 residues: Delta/kappa-theraphotoxin-Pm1a (85 aa).

The N-terminal stretch at 1–19 (MKTFVFIVLVALAFVLTAA) is a signal peptide. Positions 20-43 (KEERANPSELVSALAELVMLDAER) are excised as a propeptide. 3 disulfide bridges follow: Cys50–Cys64, Cys57–Cys69, and Cys63–Cys77.

This sequence belongs to the neurotoxin 10 (Hwtx-1) family. Expressed by the venom gland.

The protein resides in the secreted. Functionally, multimodal toxin that enhances nociceptor excitability mainly by the simultaneous stimulation of repetitive firing (through Nav1.8/SCN10A channel current enhancement) and impairment of repolarization (by inhibiting delayed rectifier current of Kv2.1/KCNB1), with a potential contribution from tetrodotoxin-sensitive voltage-gated sodium channels (Nav) modified excitability. Enhances Nav1.8/SCN10A currents (EC(50)=1.1 uM), modifies the channel gating by a right-shift in steady-state inactivation and delays open-state inactivation. Also decreases Kv2.1/KCNB1 currents (IC(50)=0.43 uM) and causes a depolarizing shift in the voltage dependence of activation without change in steady-state inactivation. In addition, inhibits peak currents of human sodium channels (Nav1.1 to Nav1.7, IC(50)=0.38-2.3 uM) and delays fast inactivation of Nav1.1/SCN1A, Nav1.3/SCN3A, Nav1.6/SCN8A, and Nav1.7/SCN9A. In small dorsal root ganglion neurons, induces hyperexcitability by enhancing tetrodotoxin-resistant sodium currents, impairing repolarization and lowering the threshold of action potential firing, consistent with the severe pain associated with envenomation. In vivo, elicits nocifensive behavior in mice after intraplantar injection. This is Delta/kappa-theraphotoxin-Pm1a from Pelinobius muticus (King baboon spider).